A 146-amino-acid polypeptide reads, in one-letter code: Keratin-associated protein 12-2 (146 aa).

23 repeat units span residues 10–14, 15–19, 20–24, 25–29, 34–38, 40–44, 45–49, 55–59, 60–64, 65–69, 70–74, 75–79, 80–84, 85–89, 90–94, 95–99, 100–104, 105–109, 110–114, 120–124, 125–129, 130–134, and 135–139. Residues 10-139 are 23 X 5 AA approximate repeats; that stretch reads CQPACCAPSP…CTSVLCRPIS (130 aa).

The protein belongs to the KRTAP type 12 family. Interacts with hair keratins. In terms of tissue distribution, restricted to a narrow region of the hair fiber cuticle, lying approximately 20 cell layers above the apex of the dermal papilla of the hair root; not detected in any other tissues.

In terms of biological role, in the hair cortex, hair keratin intermediate filaments are embedded in an interfilamentous matrix, consisting of hair keratin-associated proteins (KRTAP), which are essential for the formation of a rigid and resistant hair shaft through their extensive disulfide bond cross-linking with abundant cysteine residues of hair keratins. The matrix proteins include the high-sulfur and high-glycine-tyrosine keratins. This Homo sapiens (Human) protein is Keratin-associated protein 12-2 (KRTAP12-2).